The sequence spans 409 residues: F-box protein At3g17320 (409 aa).

An F-box domain is found at 1–47; it reads MTKISDLPRDLAEEVLSRVPVTYLRAIRFTCKKWNTLTKRRSFTKKL.

The protein is F-box protein At3g17320 of Arabidopsis thaliana (Mouse-ear cress).